A 398-amino-acid chain; its full sequence is MSLNSLDLPGKPEDTRVVVAMSGGVDSSVVAGILKREGYDVVGVTLQLYDHGAAVHRAGSCCAGQDIEDARRVSESLGIPHYVLDYEARFREAVIDPFANSYVSGETPIPCVSCNQTVKFADLLQTARDLGADALATGHYIRSRANGAHRALYRPVDTDRDQSYFLFATTQEQIDYLRFPLGHLPKAQVREIAEELGLTVAKKQDSQDICFVPQGKYSDIISRLKPEAANPGDIVHIDGRTLGRHDGIVHYTVGQRRGIGVATGEALYVVHLDAANARVIVGPREALETHKVFLRDVNWLGDTPIADLPKSGMEVFAKVRSTRPPRPAVLRHADGQTWVELVDGESGIAPGQACVLYSDDSNAACVFGGGFIGRSEREPQAEEMLRRLMANADKASAA.

ATP contacts are provided by residues 20-27 and leucine 46; that span reads AMSGGVDS. Cysteine 114 serves as the catalytic Nucleophile. Cysteines 114 and 210 form a disulfide. Glycine 138 is a binding site for ATP. The interaction with tRNA stretch occupies residues 160–162; the sequence is RDQ. Cysteine 210 functions as the Cysteine persulfide intermediate in the catalytic mechanism.

This sequence belongs to the MnmA/TRMU family.

Its subcellular location is the cytoplasm. It catalyses the reaction S-sulfanyl-L-cysteinyl-[protein] + uridine(34) in tRNA + AH2 + ATP = 2-thiouridine(34) in tRNA + L-cysteinyl-[protein] + A + AMP + diphosphate + H(+). Catalyzes the 2-thiolation of uridine at the wobble position (U34) of tRNA, leading to the formation of s(2)U34. The chain is tRNA-specific 2-thiouridylase MnmA from Brucella melitensis biotype 1 (strain ATCC 23456 / CCUG 17765 / NCTC 10094 / 16M).